The primary structure comprises 416 residues: Phosphoglycerate kinase (416 aa).

The (2R)-3-phosphoglycerate site is built by valine 23, aspartate 24, phenylalanine 25, asparagine 26, asparagine 38, arginine 39, serine 62, histidine 63, glycine 65, arginine 66, leucine 121, arginine 122, histidine 169, and arginine 170. Glycine 213 is a binding site for ADP. CDP is bound at residue glycine 213. The AMP site is built by alanine 214 and lysine 215. ATP contacts are provided by alanine 214 and lysine 215. A Mg(2+)-binding site is contributed by alanine 214. Aspartate 218 lines the CDP pocket. Residue aspartate 218 coordinates Mg(2+). Lysine 219 lines the AMP pocket. An ATP-binding site is contributed by lysine 219. Glycine 237 is an ADP binding site. Glycine 237 lines the CDP pocket. Residues glycine 238 and glycine 312 each coordinate AMP. ATP-binding residues include glycine 238 and glycine 312. Residues glycine 337 and phenylalanine 342 each coordinate CDP. Position 342 (phenylalanine 342) interacts with ADP. Position 343 (glutamate 343) interacts with AMP. Mg(2+) is bound at residue aspartate 374. An ATP-binding site is contributed by threonine 375.

The protein belongs to the phosphoglycerate kinase family. As to quaternary structure, monomer. Mg(2+) serves as cofactor.

The catalysed reaction is (2R)-3-phosphoglycerate + ATP = (2R)-3-phospho-glyceroyl phosphate + ADP. It functions in the pathway carbohydrate degradation; glycolysis; pyruvate from D-glyceraldehyde 3-phosphate: step 2/5. The chain is Phosphoglycerate kinase (PGK) from Plasmodium falciparum (isolate 3D7).